The primary structure comprises 309 residues: DSC E3 ubiquitin ligase complex subunit C (309 aa).

N-linked (GlcNAc...) asparagine glycosylation is present at asparagine 61. Disordered regions lie at residues leucine 88 to lysine 110 and glutamate 148 to leucine 177. 2 consecutive transmembrane segments (helical) span residues aspartate 257 to leucine 277 and glycine 289 to asparagine 309.

Belongs to the dsc3 family. As to quaternary structure, component of the DSC E3 ubiquitin ligase complex composed of dscA, dscB, dscC and dscD.

The protein resides in the endoplasmic reticulum membrane. Its pathway is protein modification; protein ubiquitination. Its function is as follows. Component of the DSC E3 ubiquitin ligase complex which is required for the srbA transcriptional activator proteolytic cleavage to release the soluble transcription factor from the membrane in low oxygen or sterol conditions. Required for growth during hypoxia and triazole drug susceptibility, as well as for virulence in a murine model of invasive pulmonary aspergillosis (IPA). The chain is DSC E3 ubiquitin ligase complex subunit C from Aspergillus fumigatus (strain ATCC MYA-4609 / CBS 101355 / FGSC A1100 / Af293) (Neosartorya fumigata).